We begin with the raw amino-acid sequence, 204 residues long: Ras-related protein Rab-7L1 (204 aa).

S33, K34, H35, Y36, K37, and T39 together coordinate GTP. The short motif at 36-44 is the Effector region element; it reads YKSTVGVDF. Position 71 is a phosphothreonine; by LRRK2 (T71). At S72 the chain carries Phosphoserine. GTP contacts are provided by K126, V156, and K157. 2 S-geranylgeranyl cysteine lipidation sites follow: C203 and C204.

This sequence belongs to the small GTPase superfamily. Rab family. Interacts with LRRK2 (via the N-terminus); this interaction is direct and stimulates kinase activity.

The protein localises to the cell membrane. It is found in the cytoplasm. Its subcellular location is the perinuclear region. It localises to the golgi apparatus. The protein resides in the golgi apparatus membrane. The protein localises to the trans-Golgi network. It is found in the cytoskeleton. Functionally, the small GTPases Rab are key regulators in vesicle trafficking. Essential for maintaining the integrity of endosome-trans-Golgi network structure. Together with LRRK2, plays a role in the retrograde trafficking pathway for recycling proteins, such as mannose 6 phosphate receptor (M6PR), between lysosomes and the Golgi apparatus in a retromer-dependent manner. Recruits LRRK2 to the Golgi apparatus and stimulates LRRK2 kinase activity. Stimulates phosphorylation of RAB10 'Thr-73' by LRRK2. Also regulates neuronal process morphology in the intact central nervous system (CNS). This chain is Ras-related protein Rab-7L1 (Rab29), found in Mus musculus (Mouse).